The following is a 911-amino-acid chain: Protein argonaute 4B (911 aa).

Disordered regions lie at residues 1 to 51 (MDAH…RPGL) and 149 to 171 (KTAANGSPGGNDSPGGSDRKRVR). One can recognise a PAZ domain in the interval 281–396 (PVIDFLLANQ…FPIELCSLIP (116 aa)). In terms of domain architecture, Piwi spans 565 to 872 (FLLCLLPERK…AAAQVGTFLK (308 aa)).

Belongs to the argonaute family. Ago subfamily.

Probably involved in the RNA silencing pathway. May bind to short RNAs such as microRNAs (miRNAs) or short interfering RNAs (siRNAs), and represses the translation of mRNAs which are complementary to them. In Oryza sativa subsp. japonica (Rice), this protein is Protein argonaute 4B (AGO4B).